The following is a 137-amino-acid chain: Small ribosomal subunit protein uS9c (137 aa).

Belongs to the universal ribosomal protein uS9 family.

It localises to the plastid. The protein localises to the chloroplast. The sequence is that of Small ribosomal subunit protein uS9c (rps9) from Chlorella vulgaris (Green alga).